Reading from the N-terminus, the 1486-residue chain is Chromosome partition protein MukB (1486 aa).

ATP is bound at residue 34–41; the sequence is GGNGAGKS. 3 coiled-coil regions span residues 326 to 418, 444 to 480, and 509 to 603; these read LEAD…QYNQ, LETFQAKELEATEKMLSLEQKMSMAQTAHSQFEQAYQ, and RHLA…RAPV. The segment at 666-783 is flexible hinge; that stretch reads PGGSEDQRLN…EVPLFGRAAR (118 aa). Coiled coils occupy residues 835–923, 977–1115, and 1209–1266; these read EAEI…AKLE, EMLS…TAKA, and VEAI…QNVS.

Belongs to the SMC family. MukB subfamily. As to quaternary structure, homodimerization via its hinge domain. Binds to DNA via its C-terminal region. Interacts, and probably forms a ternary complex, with MukE and MukF via its C-terminal region. The complex formation is stimulated by calcium or magnesium. Interacts with tubulin-related protein FtsZ.

The protein localises to the cytoplasm. It localises to the nucleoid. Its function is as follows. Plays a central role in chromosome condensation, segregation and cell cycle progression. Functions as a homodimer, which is essential for chromosome partition. Involved in negative DNA supercoiling in vivo, and by this means organize and compact chromosomes. May achieve or facilitate chromosome segregation by condensation DNA from both sides of a centrally located replisome during cell division. This is Chromosome partition protein MukB from Shigella boydii serotype 4 (strain Sb227).